A 398-amino-acid polypeptide reads, in one-letter code: Acetate kinase (398 aa).

Mg(2+) is bound at residue asparagine 8. Lysine 15 is a binding site for ATP. Arginine 89 is a substrate binding site. The active-site Proton donor/acceptor is the aspartate 146. Residues 206–210, 283–285, and 331–335 contribute to the ATP site; these read HIGNG, DMR, and GMGEN. Position 383 (glutamate 383) interacts with Mg(2+).

Belongs to the acetokinase family. In terms of assembly, homodimer. The cofactor is Mg(2+). Mn(2+) serves as cofactor.

Its subcellular location is the cytoplasm. It carries out the reaction acetate + ATP = acetyl phosphate + ADP. The protein operates within metabolic intermediate biosynthesis; acetyl-CoA biosynthesis; acetyl-CoA from acetate: step 1/2. Its function is as follows. Catalyzes the formation of acetyl phosphate from acetate and ATP. Can also catalyze the reverse reaction. The chain is Acetate kinase from Streptococcus pyogenes serotype M2 (strain MGAS10270).